Reading from the N-terminus, the 337-residue chain is Anthranilate phosphoribosyltransferase (337 aa).

Residues Gly-81, Gly-84–Asp-85, Ser-89, Asn-91–Thr-94, Lys-109–Ser-117, and Ala-121 contribute to the 5-phospho-alpha-D-ribose 1-diphosphate site. Residue Gly-81 coordinates anthranilate. Ser-93 contacts Mg(2+). Residue Asn-112 coordinates anthranilate. Arg-167 lines the anthranilate pocket. Residues Asp-226 and Glu-227 each coordinate Mg(2+).

This sequence belongs to the anthranilate phosphoribosyltransferase family. In terms of assembly, homodimer. It depends on Mg(2+) as a cofactor.

The catalysed reaction is N-(5-phospho-beta-D-ribosyl)anthranilate + diphosphate = 5-phospho-alpha-D-ribose 1-diphosphate + anthranilate. The protein operates within amino-acid biosynthesis; L-tryptophan biosynthesis; L-tryptophan from chorismate: step 2/5. Catalyzes the transfer of the phosphoribosyl group of 5-phosphorylribose-1-pyrophosphate (PRPP) to anthranilate to yield N-(5'-phosphoribosyl)-anthranilate (PRA). This Bradyrhizobium diazoefficiens (strain JCM 10833 / BCRC 13528 / IAM 13628 / NBRC 14792 / USDA 110) protein is Anthranilate phosphoribosyltransferase.